Reading from the N-terminus, the 335-residue chain is Glycerol-3-phosphate dehydrogenase [NAD(P)+] (335 aa).

NADPH contacts are provided by S12, W13, R33, R34, and K107. Residues K107, G134, and S136 each contribute to the sn-glycerol 3-phosphate site. An NADPH-binding site is contributed by A138. Residues K189, D242, S252, R253, and N254 each contribute to the sn-glycerol 3-phosphate site. K189 (proton acceptor) is an active-site residue. Position 253 (R253) interacts with NADPH. NADPH contacts are provided by V277 and E279.

Belongs to the NAD-dependent glycerol-3-phosphate dehydrogenase family.

It is found in the cytoplasm. It catalyses the reaction sn-glycerol 3-phosphate + NAD(+) = dihydroxyacetone phosphate + NADH + H(+). The catalysed reaction is sn-glycerol 3-phosphate + NADP(+) = dihydroxyacetone phosphate + NADPH + H(+). The protein operates within membrane lipid metabolism; glycerophospholipid metabolism. Functionally, catalyzes the reduction of the glycolytic intermediate dihydroxyacetone phosphate (DHAP) to sn-glycerol 3-phosphate (G3P), the key precursor for phospholipid synthesis. The polypeptide is Glycerol-3-phosphate dehydrogenase [NAD(P)+] (Moorella thermoacetica (strain ATCC 39073 / JCM 9320)).